The following is a 1007-amino-acid chain: Glutamate receptor ionotropic, delta-2 (1007 aa).

Residues 1–23 (MEVFPLLFFLSFWWSRTWDLATS) form the signal peptide. An interaction with CBLN1 homotrimer region spans residues 24-345 (DSIIHIGAIF…NAFHKKLEDR (322 aa)). Topologically, residues 24 to 566 (DSIIHIGAIF…DMFACLAPFD (543 aa)) are extracellular. Cystine bridges form between C83/C355, C99/C131, and C298/C310. N293 carries N-linked (GlcNAc...) asparagine glycosylation. N426 carries N-linked (GlcNAc...) asparagine glycosylation. The chain crosses the membrane as a helical span at residues 567–587 (LSLWACIAGTVLLVGLLVYLL). At 588–635 (NWLNPPRLQMGSMTSTTLYNSMWFVYGSFVQQGGEVPYTTLATRMMMG) the chain is on the cytoplasmic side. Residues 636 to 656 (AWWLFALIVISSYTANLAAFL) form a helical membrane-spanning segment. The Extracellular portion of the chain corresponds to 657 to 830 (TITRIESSIQ…QKGGALDIKS (174 aa)). Residues N713 and N716 are each glycosylated (N-linked (GlcNAc...) asparagine). The chain crosses the membrane as a helical span at residues 831–851 (LAGVFCILAAGIVLSCLIAVL). The Cytoplasmic portion of the chain corresponds to 852–1007 (ETWWSRRKGS…GNDPDRGTSI (156 aa)). S883 is modified (phosphoserine). T886 carries the phosphothreonine modification. Phosphoserine is present on S890. Residues 921–991 (DFRNTHITTT…MSSIPYQPTP (71 aa)) form an interaction with AP4M1 region. The PDZ-binding motif lies at 1005 to 1007 (TSI). At S1006 the chain carries Phosphoserine.

It belongs to the glutamate-gated ion channel (TC 1.A.10.1) family. GRID2 subfamily. Tetramer; dimer of dimers. Interacts with AP4M1. Interacts with EML2. Interacts with MAGI2 (via PDZ domains). Interacts with BECN1, GOPC, GRID2IP, SHANK1 and SHANK2. Interacts with CBLN2, but not with CBLN4. Interacts with CBLN1 (via C1q domain); the interaction is CBLN1-NRX1 complex formation-dependent; CBLN1-binding is calcium-independent; CBLN1 hexamers anchor GRID2 N-terminal domain dimers to monomeric NRXN1 isoform beta; promotes synaptogenesis and mediates the D-Serine-dependent long term depression signals and AMPA receptor endocytosis. Expressed at high levels in the cerebellar Purkinje cell layer, almost absent in the forebrain.

The protein resides in the postsynaptic cell membrane. The catalysed reaction is Ca(2+)(in) = Ca(2+)(out). It carries out the reaction Na(+)(in) = Na(+)(out). Its function is as follows. Member of the ionotropic glutamate receptor family, which plays a crucial role in synaptic organization and signal transduction in the central nervous system. Although it shares structural features with ionotropic glutamate receptors, does not bind glutamate as a primary ligand. Promotes synaptogenesis and mediates the D-Serine-dependent long term depression signals and AMPA receptor endocytosis of cerebellar parallel fiber-Purkinje cell (PF-PC) synapses through the NRX1B-CBLN1-GRID2 triad complex. In the presence of neurexins and cerebellins, forms cation-selective channels that are proposed to be gated by glycine and D-serine. However, recent research disputes this ligand-gated cation channel activity. Cation-selective ion channel activity can be triggered by GRM1 in Purkinje cells. This Rattus norvegicus (Rat) protein is Glutamate receptor ionotropic, delta-2 (Grid2).